The primary structure comprises 592 residues: A-type ATP synthase subunit A (592 aa).

236–243 provides a ligand contact to ATP; that stretch reads GPFGSGKT.

The protein belongs to the ATPase alpha/beta chains family. In terms of assembly, has multiple subunits with at least A(3), B(3), C, D, E, F, H, I and proteolipid K(x).

Its subcellular location is the cell membrane. The enzyme catalyses ATP + H2O + 4 H(+)(in) = ADP + phosphate + 5 H(+)(out). Component of the A-type ATP synthase that produces ATP from ADP in the presence of a proton gradient across the membrane. The A chain is the catalytic subunit. In Methanopyrus kandleri (strain AV19 / DSM 6324 / JCM 9639 / NBRC 100938), this protein is A-type ATP synthase subunit A.